The sequence spans 395 residues: Flavohemoprotein (395 aa).

The region spanning methionine 1–serine 136 is the Globin domain. Histidine 85 lines the heme b pocket. Residues tyrosine 95 and glutamate 135 each act as charge relay system in the active site. Residues glycine 147 to isoleucine 395 form a reductase region. An FAD-binding FR-type domain is found at histidine 150 to glutamate 255. Residues tyrosine 188 and arginine 204–serine 207 contribute to the FAD site. Position 268-273 (glycine 268–proline 273) interacts with NADP(+). An FAD-binding site is contributed by cysteine 388 to proline 391.

Belongs to the globin family. Two-domain flavohemoproteins subfamily. It in the C-terminal section; belongs to the flavoprotein pyridine nucleotide cytochrome reductase family. It depends on heme b as a cofactor. The cofactor is FAD.

It is found in the cytoplasm. It catalyses the reaction 2 nitric oxide + NADPH + 2 O2 = 2 nitrate + NADP(+) + H(+). The catalysed reaction is 2 nitric oxide + NADH + 2 O2 = 2 nitrate + NAD(+) + H(+). Functionally, is involved in NO detoxification in an aerobic process, termed nitric oxide dioxygenase (NOD) reaction that utilizes O(2) and NAD(P)H to convert NO to nitrate, which protects the bacterium from various noxious nitrogen compounds. Therefore, plays a central role in the inducible response to nitrosative stress. The sequence is that of Flavohemoprotein (hmp) from Dickeya dadantii (strain 3937) (Erwinia chrysanthemi (strain 3937)).